The chain runs to 177 residues: MTSNSDGSSTSPVEKPITGDVETNEPTKPIRRLSTPSPEQDQEGDFDEEDDDDKFSVSTSTPTPTITKTKDSSDTSTVTRRKQPIRYIENKTRRHVTFSKRRHGIMKKAYELSVLTGANILLLILANSGLVYTFTTPKLEPVVREDEGKSLIRACINASDTPDATDTSPAQEQSPAN.

Over residues 1 to 12 (MTSNSDGSSTSP) the composition is skewed to polar residues. Disordered regions lie at residues 1–82 (MTSN…TRRK) and 157–177 (NASDTPDATDTSPAQEQSPAN). A compositionally biased stretch (acidic residues) spans 40–53 (QDQEGDFDEEDDDD). Positions 56–67 (SVSTSTPTPTIT) are enriched in low complexity. Positions 80 to 134 (RRKQPIRYIENKTRRHVTFSKRRHGIMKKAYELSVLTGANILLLILANSGLVYTF) constitute an MADS-box domain. Residues 158–177 (ASDTPDATDTSPAQEQSPAN) show a composition bias toward polar residues.

As to quaternary structure, interacts with ARG81 and ARG82.

Its subcellular location is the nucleus. In terms of biological role, with ARG81, ARG82 and MCM1, coordinates the expression of arginine anabolic and catabolic genes in response to arginine. This Saccharomyces cerevisiae (strain ATCC 204508 / S288c) (Baker's yeast) protein is Arginine metabolism regulation protein I (ARG80).